The primary structure comprises 136 residues: Histone H2A (136 aa).

Over residues 1–11 (MSSGGKSGGKA) the composition is skewed to gly residues. A disordered region spans residues 1–24 (MSSGGKSGGKAGDASSKAQSRSAK). An N6-acetyllysine mark is found at Lys6 and Lys10. Low complexity predominate over residues 12–24 (GDASSKAQSRSAK). Gln108 carries the post-translational modification N5-methylglutamine. Ser133 carries the post-translational modification Phosphoserine. Positions 133 to 134 (SQ) match the [ST]-Q motif motif.

It belongs to the histone H2A family. As to quaternary structure, the nucleosome is a histone octamer containing two molecules each of H2A, H2B, H3 and H4 assembled in one H3-H4 heterotetramer and two H2A-H2B heterodimers. The octamer wraps approximately 147 bp of DNA. Post-translationally, phosphorylated to form H2AS128ph (gamma-H2A) in response to DNA double-strand breaks (DSBs) generated by exogenous genotoxic agents and by stalled replication forks. Phosphorylation is dependent on the DNA damage checkpoint kinases MEC1/ATR and TEL1/ATM, spreads on either side of a detected DSB site and may mark the surrounding chromatin for recruitment of proteins required for DNA damage signaling and repair. Gamma-H2A is removed from the DNA prior to the strand invasion-primer extension step of the repair process and subsequently dephosphorylated. Dephosphorylation is necessary for efficient recovery from the DNA damage checkpoint. In terms of processing, acetylated by ESA1 to form H2AK4ac and H2AK7ac.

The protein localises to the nucleus. Its subcellular location is the chromosome. Functionally, core component of nucleosome which plays a central role in DNA double strand break (DSB) repair. Nucleosomes wrap and compact DNA into chromatin, limiting DNA accessibility to the cellular machineries which require DNA as a template. Histones thereby play a central role in transcription regulation, DNA repair, DNA replication and chromosomal stability. DNA accessibility is regulated via a complex set of post-translational modifications of histones, also called histone code, and nucleosome remodeling. This chain is Histone H2A (HTA1), found in Mycosarcoma maydis (Corn smut fungus).